The chain runs to 211 residues: Pyridoxine/pyridoxamine 5'-phosphate oxidase (211 aa).

Residues 8–11 (RKNY) and lysine 66 contribute to the substrate site. FMN contacts are provided by residues 61-66 (RIVLLK), 76-77 (FT), lysine 83, and glutamine 105. Positions 123, 127, and 131 each coordinate substrate. Residues 140-141 (QS) and tryptophan 184 each bind FMN. Residue 190 to 192 (RLH) coordinates substrate. Arginine 194 is an FMN binding site.

Belongs to the pyridoxamine 5'-phosphate oxidase family. In terms of assembly, homodimer. Requires FMN as cofactor.

The enzyme catalyses pyridoxamine 5'-phosphate + O2 + H2O = pyridoxal 5'-phosphate + H2O2 + NH4(+). It carries out the reaction pyridoxine 5'-phosphate + O2 = pyridoxal 5'-phosphate + H2O2. The protein operates within cofactor metabolism; pyridoxal 5'-phosphate salvage; pyridoxal 5'-phosphate from pyridoxamine 5'-phosphate: step 1/1. It functions in the pathway cofactor metabolism; pyridoxal 5'-phosphate salvage; pyridoxal 5'-phosphate from pyridoxine 5'-phosphate: step 1/1. Its function is as follows. Catalyzes the oxidation of either pyridoxine 5'-phosphate (PNP) or pyridoxamine 5'-phosphate (PMP) into pyridoxal 5'-phosphate (PLP). The protein is Pyridoxine/pyridoxamine 5'-phosphate oxidase of Polynucleobacter asymbioticus (strain DSM 18221 / CIP 109841 / QLW-P1DMWA-1) (Polynucleobacter necessarius subsp. asymbioticus).